Reading from the N-terminus, the 145-residue chain is 3-hydroxyacyl-[acyl-carrier-protein] dehydratase FabZ (145 aa).

H49 is an active-site residue.

Belongs to the thioester dehydratase family. FabZ subfamily.

Its subcellular location is the cytoplasm. It catalyses the reaction a (3R)-hydroxyacyl-[ACP] = a (2E)-enoyl-[ACP] + H2O. In terms of biological role, involved in unsaturated fatty acids biosynthesis. Catalyzes the dehydration of short chain beta-hydroxyacyl-ACPs and long chain saturated and unsaturated beta-hydroxyacyl-ACPs. In Rickettsia felis (strain ATCC VR-1525 / URRWXCal2) (Rickettsia azadi), this protein is 3-hydroxyacyl-[acyl-carrier-protein] dehydratase FabZ.